The chain runs to 406 residues: Phosphopentomutase (406 aa).

Mn(2+) is bound by residues Asp-10, Asp-305, His-310, Asp-346, His-347, and His-358.

This sequence belongs to the phosphopentomutase family. Mn(2+) is required as a cofactor.

It localises to the cytoplasm. The enzyme catalyses 2-deoxy-alpha-D-ribose 1-phosphate = 2-deoxy-D-ribose 5-phosphate. The catalysed reaction is alpha-D-ribose 1-phosphate = D-ribose 5-phosphate. The protein operates within carbohydrate degradation; 2-deoxy-D-ribose 1-phosphate degradation; D-glyceraldehyde 3-phosphate and acetaldehyde from 2-deoxy-alpha-D-ribose 1-phosphate: step 1/2. Functionally, isomerase that catalyzes the conversion of deoxy-ribose 1-phosphate (dRib-1-P) and ribose 1-phosphate (Rib-1-P) to deoxy-ribose 5-phosphate (dRib-5-P) and ribose 5-phosphate (Rib-5-P), respectively. In Sinorhizobium fredii (strain NBRC 101917 / NGR234), this protein is Phosphopentomutase.